Consider the following 172-residue polypeptide: ATP synthase subunit b (172 aa).

The helical transmembrane segment at 5–24 (LLMLLLLGSVSLFANEAAAS) threads the bilayer.

The protein belongs to the ATPase B chain family. F-type ATPases have 2 components, F(1) - the catalytic core - and F(0) - the membrane proton channel. F(1) has five subunits: alpha(3), beta(3), gamma(1), delta(1), epsilon(1). F(0) has three main subunits: a(1), b(2) and c(10-14). The alpha and beta chains form an alternating ring which encloses part of the gamma chain. F(1) is attached to F(0) by a central stalk formed by the gamma and epsilon chains, while a peripheral stalk is formed by the delta and b chains.

It is found in the cell inner membrane. Its function is as follows. F(1)F(0) ATP synthase produces ATP from ADP in the presence of a proton or sodium gradient. F-type ATPases consist of two structural domains, F(1) containing the extramembraneous catalytic core and F(0) containing the membrane proton channel, linked together by a central stalk and a peripheral stalk. During catalysis, ATP synthesis in the catalytic domain of F(1) is coupled via a rotary mechanism of the central stalk subunits to proton translocation. Component of the F(0) channel, it forms part of the peripheral stalk, linking F(1) to F(0). The sequence is that of ATP synthase subunit b from Nitratiruptor sp. (strain SB155-2).